We begin with the raw amino-acid sequence, 268 residues long: Imidazole glycerol phosphate synthase subunit HisF (268 aa).

Residues D12 and D131 contribute to the active site.

Belongs to the HisA/HisF family. Heterodimer of HisH and HisF.

Its subcellular location is the cytoplasm. It carries out the reaction 5-[(5-phospho-1-deoxy-D-ribulos-1-ylimino)methylamino]-1-(5-phospho-beta-D-ribosyl)imidazole-4-carboxamide + L-glutamine = D-erythro-1-(imidazol-4-yl)glycerol 3-phosphate + 5-amino-1-(5-phospho-beta-D-ribosyl)imidazole-4-carboxamide + L-glutamate + H(+). It functions in the pathway amino-acid biosynthesis; L-histidine biosynthesis; L-histidine from 5-phospho-alpha-D-ribose 1-diphosphate: step 5/9. Its function is as follows. IGPS catalyzes the conversion of PRFAR and glutamine to IGP, AICAR and glutamate. The HisF subunit catalyzes the cyclization activity that produces IGP and AICAR from PRFAR using the ammonia provided by the HisH subunit. This Methanosphaerula palustris (strain ATCC BAA-1556 / DSM 19958 / E1-9c) protein is Imidazole glycerol phosphate synthase subunit HisF.